We begin with the raw amino-acid sequence, 649 residues long: Protein teflon (649 aa).

Residues 33 to 56 (LYCHFCRDLFTQLPEFLRHLQSNH) form a C2H2-type 1 zinc finger. The disordered stretch occupies residues 78 to 126 (EQGKAHEDAQSAGHNSSSGDSSSLMNSEDSRAIEGSEDNSDNSPMKPEQ). Over residues 88-104 (SAGHNSSSGDSSSLMNS) the composition is skewed to low complexity. 2 C2H2-type zinc fingers span residues 599–621 (YFCKCCDDIFILKKEYLKHLISH) and 625–648 (FQCTKCIKVFKYKGYYEKHLRNAH).

It belongs to the Teflon family. As to expression, expressed at a low level in a variety of tissues, highest expression is in testis.

It is found in the nucleus. It localises to the chromosome. In terms of biological role, specifically required in males for proper segregation of autosomal bivalents at meiosis I. Expression is required in the male germ line prior to spermatocyte stage S4. May have a role as a bridging molecule maintaining adhesion to hold autosome bivalents together via heterochromatic connections. The protein is Protein teflon of Drosophila melanogaster (Fruit fly).